The sequence spans 342 residues: Phosphatidate cytidylyltransferase, mitochondrial (342 aa).

Belongs to the TAM41 family. Mg(2+) serves as cofactor. Co(2+) is required as a cofactor. It depends on Cu(2+) as a cofactor.

The protein resides in the mitochondrion inner membrane. It carries out the reaction a 1,2-diacyl-sn-glycero-3-phosphate + CTP + H(+) = a CDP-1,2-diacyl-sn-glycerol + diphosphate. It functions in the pathway phospholipid metabolism; CDP-diacylglycerol biosynthesis; CDP-diacylglycerol from sn-glycerol 3-phosphate: step 3/3. Catalyzes the formation of CDP-diacylglycerol (CDP-DAG) from phosphatidic acid (PA) in the mitochondrial inner membrane. Required for the biosynthesis of the dimeric phospholipid cardiolipin, which stabilizes supercomplexes of the mitochondrial respiratory chain in the mitochondrial inner membrane. The polypeptide is Phosphatidate cytidylyltransferase, mitochondrial (Drosophila melanogaster (Fruit fly)).